A 229-amino-acid chain; its full sequence is Ribonuclease T (229 aa).

One can recognise an Exonuclease domain in the interval 23–197 (VIIDVETAGF…YDTERTAKLF (175 aa)). Mg(2+) contacts are provided by Asp-26, Glu-28, His-184, and Asp-189. His-184 functions as the Proton donor/acceptor in the catalytic mechanism.

This sequence belongs to the RNase T family. In terms of assembly, homodimer. Mg(2+) serves as cofactor.

Trims short 3' overhangs of a variety of RNA species, leaving a one or two nucleotide 3' overhang. Responsible for the end-turnover of tRNA: specifically removes the terminal AMP residue from uncharged tRNA (tRNA-C-C-A). Also appears to be involved in tRNA biosynthesis. The polypeptide is Ribonuclease T (Haemophilus influenzae (strain PittGG)).